Reading from the N-terminus, the 373-residue chain is Melanoma-associated antigen C2 (373 aa).

Residues 1-102 form a disordered region; it reads MPPVPGVPFR…QGPSQSPLSS (102 aa). The span at 40–60 shows a compositional bias: low complexity; that stretch reads SSASSTLYLVFSPSSFSTSSS. A compositionally biased stretch (pro residues) spans 85-94; it reads SSPPQGPPQG. The interval 135–373 is interaction with TRIM28; the sequence is SSFTYTLDEK…VMSSNVSFSE (239 aa). Residues 141–336 enclose the MAGE domain; it reads LDEKVAELVE…SSFPSWYKDA (196 aa).

As to quaternary structure, interacts with TRIM28 and UBE2H. In terms of tissue distribution, not expressed in normal tissues, except in germ cells in the seminiferous tubules and in Purkinje cells of the cerebellum. Expressed in various tumors, including melanoma, lymphoma, as well as pancreatic cancer, mammary gland cancer, non-small cell lung cancer and liver cancer. In hepatocellular carcinoma, there is an inverse correlation between tumor differentiation and protein expression, i.e. the lower the differentiation, the higher percentage of expression.

It is found in the cytoplasm. The protein localises to the nucleus. In terms of biological role, proposed to enhance ubiquitin ligase activity of RING-type zinc finger-containing E3 ubiquitin-protein ligases. In vitro enhances ubiquitin ligase activity of TRIM28 and stimulates p53/TP53 ubiquitination in presence of Ubl-conjugating enzyme UBE2H leading to p53/TP53 degradation. Proposed to act through recruitment and/or stabilization of the Ubl-conjugating enzymes (E2) at the E3:substrate complex. The chain is Melanoma-associated antigen C2 (MAGEC2) from Homo sapiens (Human).